Consider the following 244-residue polypeptide: Small ribosomal subunit protein uS3 (244 aa).

The 72-residue stretch at 39–110 (IRDYVRKNLS…QIRINVIEVE (72 aa)) folds into the KH type-2 domain. The tract at residues 215-244 (EDAAPSNVGQPRRRNQQRRRQQFEDRSNEG) is disordered. Positions 225–234 (PRRRNQQRRR) are enriched in basic residues. A compositionally biased stretch (basic and acidic residues) spans 235–244 (QQFEDRSNEG).

The protein belongs to the universal ribosomal protein uS3 family. In terms of assembly, part of the 30S ribosomal subunit. Forms a tight complex with proteins S10 and S14.

Binds the lower part of the 30S subunit head. Binds mRNA in the 70S ribosome, positioning it for translation. The polypeptide is Small ribosomal subunit protein uS3 (Synechococcus sp. (strain ATCC 27144 / PCC 6301 / SAUG 1402/1) (Anacystis nidulans)).